The sequence spans 325 residues: Phosphate import ATP-binding protein PstB (325 aa).

The region spanning 79–320 is the ABC transporter domain; sequence IDNYNLWYSN…PNNEKTKDYI (242 aa). 111–118 contacts ATP; sequence GPSGCGKS.

It belongs to the ABC transporter superfamily. Phosphate importer (TC 3.A.1.7) family. The complex is composed of two ATP-binding proteins (PstB), two transmembrane proteins (PstC and PstA) and a solute-binding protein (PstS).

Its subcellular location is the cell membrane. The catalysed reaction is phosphate(out) + ATP + H2O = ADP + 2 phosphate(in) + H(+). In terms of biological role, part of the ABC transporter complex PstSACB involved in phosphate import. Responsible for energy coupling to the transport system. The sequence is that of Phosphate import ATP-binding protein PstB from Mycoplasmoides gallisepticum (strain R(low / passage 15 / clone 2)) (Mycoplasma gallisepticum).